We begin with the raw amino-acid sequence, 603 residues long: UvrABC system protein C (603 aa).

The region spanning 15-92 (DQPGCYLMKD…IKKHDPRFNI (78 aa)) is the GIY-YIG domain. Positions 197 to 232 (KTVKNDLMKKMQEAAENMEFEKAGEFRDQINAIETT) constitute a UVR domain.

The protein belongs to the UvrC family. In terms of assembly, interacts with UvrB in an incision complex.

It is found in the cytoplasm. Its function is as follows. The UvrABC repair system catalyzes the recognition and processing of DNA lesions. UvrC both incises the 5' and 3' sides of the lesion. The N-terminal half is responsible for the 3' incision and the C-terminal half is responsible for the 5' incision. The protein is UvrABC system protein C of Listeria monocytogenes serotype 4b (strain CLIP80459).